The following is a 550-amino-acid chain: CTP synthase (550 aa).

The tract at residues 1–270 (MTKYVFVTGG…DNIVCEALGL (270 aa)) is amidoligase domain. Ser13 contributes to the CTP binding site. Position 13 (Ser13) interacts with UTP. ATP contacts are provided by residues 14–19 (SLGKGI) and Asp71. Mg(2+) contacts are provided by Asp71 and Glu144. CTP is bound by residues 151-153 (DIE), 191-196 (KTKPTQ), and Lys227. UTP-binding positions include 191-196 (KTKPTQ) and Lys227. The Glutamine amidotransferase type-1 domain occupies 295–545 (TIGMVGKYVD…IRAALEHKAQ (251 aa)). Gly356 provides a ligand contact to L-glutamine. Cys383 acts as the Nucleophile; for glutamine hydrolysis in catalysis. Residues 384–387 (LGMQ) and Glu407 contribute to the L-glutamine site. The disordered stretch occupies residues 430–459 (VERRDNSSDLGGTMRKGAQRCPIRPGTRAQ). Arg473 is a binding site for L-glutamine. Active-site residues include His518 and Glu520.

Belongs to the CTP synthase family. Homotetramer.

It carries out the reaction UTP + L-glutamine + ATP + H2O = CTP + L-glutamate + ADP + phosphate + 2 H(+). It catalyses the reaction L-glutamine + H2O = L-glutamate + NH4(+). The catalysed reaction is UTP + NH4(+) + ATP = CTP + ADP + phosphate + 2 H(+). It functions in the pathway pyrimidine metabolism; CTP biosynthesis via de novo pathway; CTP from UDP: step 2/2. Its activity is regulated as follows. Allosterically activated by GTP, when glutamine is the substrate; GTP has no effect on the reaction when ammonia is the substrate. The allosteric effector GTP functions by stabilizing the protein conformation that binds the tetrahedral intermediate(s) formed during glutamine hydrolysis. Inhibited by the product CTP, via allosteric rather than competitive inhibition. Catalyzes the ATP-dependent amination of UTP to CTP with either L-glutamine or ammonia as the source of nitrogen. Regulates intracellular CTP levels through interactions with the four ribonucleotide triphosphates. The chain is CTP synthase from Bordetella parapertussis (strain 12822 / ATCC BAA-587 / NCTC 13253).